We begin with the raw amino-acid sequence, 523 residues long: Ribonuclease Y (523 aa).

A helical transmembrane segment spans residues 3–23 (VWYAIGSIIFGLLVGVSVYLI). Residues 213–279 (LVNVINLPND…TKTIEKLVED (67 aa)) form the KH domain. An HD domain is found at 339-432 (ALGHSIEVAN…VCAADTLSAA (94 aa)).

This sequence belongs to the RNase Y family.

The protein resides in the cell membrane. In terms of biological role, endoribonuclease that initiates mRNA decay. The polypeptide is Ribonuclease Y (Helicobacter hepaticus (strain ATCC 51449 / 3B1)).